The following is a 517-amino-acid chain: Glutamyl-tRNA(Gln) amidotransferase subunit A, mitochondrial (517 aa).

Residues K58 and S131 each act as charge relay system in the active site. The disordered stretch occupies residues 106–132 (FGMGTHSTHSAHGPVASPAGRSAGGSS). S155 serves as the catalytic Acyl-ester intermediate.

Belongs to the amidase family. GatA subfamily. As to quaternary structure, subunit of the heterotrimeric GatCAB amidotransferase (AdT) complex, composed of A, B and C subunits.

It localises to the mitochondrion. The enzyme catalyses L-glutamyl-tRNA(Gln) + L-glutamine + ATP + H2O = L-glutaminyl-tRNA(Gln) + L-glutamate + ADP + phosphate + H(+). Its function is as follows. Allows the formation of correctly charged Gln-tRNA(Gln) through the transamidation of misacylated Glu-tRNA(Gln) in the mitochondria. The reaction takes place in the presence of glutamine and ATP through an activated gamma-phospho-Glu-tRNA(Gln). The polypeptide is Glutamyl-tRNA(Gln) amidotransferase subunit A, mitochondrial (Pyricularia oryzae (strain 70-15 / ATCC MYA-4617 / FGSC 8958) (Rice blast fungus)).